A 153-amino-acid chain; its full sequence is uncharacterized protein (153 aa).

A signal peptide spans 1–18; that stretch reads MSARISKQLRLSVPPCLA. Residues asparagine 19 and asparagine 25 are each glycosylated (N-linked (GlcNAc...) asparagine). At 19–43 the chain is on the extracellular side; the sequence is NRTTASNSSSCVTEVEPLLQSFSST. The chain crosses the membrane as a helical span at residues 44–64; sequence LVLIVLATVIFCLVVLSLSTF. At 65–153 the chain is on the cytoplasmic side; it reads HMHKSKMKKR…EHLQQSVVLS (89 aa). The segment at 75–115 is disordered; it reads KIEKAQEEYERDHCSPKAERGHLHGMGRGGTHGSPTSPTIQ. Residues 77–96 are compositionally biased toward basic and acidic residues; the sequence is EKAQEEYERDHCSPKAERGH.

It localises to the membrane. This is an uncharacterized protein from Xenopus tropicalis (Western clawed frog).